The chain runs to 417 residues: Signal recognition particle receptor FtsY (417 aa).

Residues 228–235 (GINGTGKT), 310–314 (DTAGR), and 368–371 (TKID) each bind GTP.

Belongs to the GTP-binding SRP family. FtsY subfamily. As to quaternary structure, part of the signal recognition particle protein translocation system, which is composed of SRP and FtsY.

The protein localises to the cell membrane. Its subcellular location is the cytoplasm. It carries out the reaction GTP + H2O = GDP + phosphate + H(+). In terms of biological role, involved in targeting and insertion of nascent membrane proteins into the cytoplasmic membrane. Acts as a receptor for the complex formed by the signal recognition particle (SRP) and the ribosome-nascent chain (RNC). In Methanosarcina acetivorans (strain ATCC 35395 / DSM 2834 / JCM 12185 / C2A), this protein is Signal recognition particle receptor FtsY.